Reading from the N-terminus, the 248-residue chain is Triosephosphate isomerase (248 aa).

Residues asparagine 10 and lysine 12 each coordinate substrate. Residue histidine 95 is the Electrophile of the active site. Glutamate 165 serves as the catalytic Proton acceptor.

It belongs to the triosephosphate isomerase family. As to quaternary structure, homodimer.

It catalyses the reaction D-glyceraldehyde 3-phosphate = dihydroxyacetone phosphate. It participates in carbohydrate biosynthesis; gluconeogenesis. Its pathway is carbohydrate degradation; glycolysis; D-glyceraldehyde 3-phosphate from glycerone phosphate: step 1/1. The chain is Triosephosphate isomerase (TPI1) from Debaryomyces hansenii (strain ATCC 36239 / CBS 767 / BCRC 21394 / JCM 1990 / NBRC 0083 / IGC 2968) (Yeast).